Reading from the N-terminus, the 497-residue chain is MTKHIIVIGGGLGGISAAIRMAQSGYSVSLYEQNNHIGGKVNRHESDDFGFDLGPSILTMPYIFEKLFEYSKKQMSDYVTIKRLPHQWRSFFPDGTTIDLYEGIKETGQHNAILSKQDIEELQNYLNYTRRIDRITEKGYFNYGLDTLSQIIKFHGPLNALINYDYVHTMQQAIDKRISNPYLRQMLGYFIKYVGSSSYDAPAVLSMLFHMQQEQGLWYVEGGIHHLANALEKLAREEGVTIHTGTRVDNIKTYERCVTGVRLDTGEFVKADYIISNMEVIPTYKYLLHLDTQRLNKLEREFEPASSGYVMHLGVACQYPQLAHHNFFFTENAYLNYQQVFHEKVLPDDPTIYLVNTNKTDHTQAPVGYENIKVLPHIPYIQDQPFTTEDYAKFRDKILDKLEKMGLTDLRKHIIYEDVWTPEDIEKNYRSNRGAIYGVVADKKKNKGFKFPKESQYFENLYFVGGSVNPGGGMPMVTLSGQQVADKINAREAKNRK.

7-19 (VIGGGLGGISAAI) contributes to the FAD binding site.

The protein belongs to the carotenoid/retinoid oxidoreductase family. CrtP subfamily. The cofactor is FAD.

The enzyme catalyses all-trans-4,4'-diaponeurosporene + 2 AH2 + 2 O2 = 4,4'-diaponeurosporenal + 2 A + 3 H2O. It functions in the pathway carotenoid biosynthesis; staphyloxanthin biosynthesis; staphyloxanthin from farnesyl diphosphate: step 3/5. Involved in the biosynthesis of the yellow-orange carotenoid staphyloxanthin, which plays a role in the virulence via its protective function against oxidative stress. Catalyzes the oxidation of the terminal methyl side group of 4,4'-diaponeurosporene to form 4,4'-diaponeurosporen-4-al. This chain is 4,4'-diaponeurosporene oxygenase, found in Staphylococcus aureus (strain MRSA252).